Here is a 74-residue protein sequence, read N- to C-terminus: uncharacterized protein (74 aa).

This is an uncharacterized protein from Staphylococcus aureus.